A 317-amino-acid polypeptide reads, in one-letter code: Apolipoprotein E (317 aa).

Positions 1-18 (MKVLWAALLVTFLAGCQA) are cleaved as a signal peptide. 8 tandem repeats follow at residues 80–101 (ALMD…EQLT), 102–123 (PVAE…ARLG), 124–145 (ADME…AMLG), 146–167 (QSTE…KRLL), 168–189 (RDAD…EGAE), 190–211 (RGVS…VRAA), 212–233 (TVGS…ERLR), and 234–255 (ARME…EQVA). An 8 X 22 AA approximate tandem repeats region spans residues 80-255 (ALMDETMKEL…RLDEVKEQVA (176 aa)). M143 is subject to Methionine sulfoxide. S147 is subject to Phosphoserine. The interval 158-168 (HLRKLRKRLLR) is LDL and other lipoprotein receptors binding. 162–165 (LRKR) is a binding site for heparin. The tract at residues 210 to 290 (AATVGSLAGQ…SWFEPLVEDM (81 aa)) is lipid-binding and lipoprotein association. Residue 229–236 (GERLRARM) coordinates heparin. Residues 266 to 317 (QQIRLQAEAFQARLKSWFEPLVEDMQRQWAGLVEKVQAAVGTSAAPVPSDNH) are homooligomerization. Residues 278 to 290 (RLKSWFEPLVEDM) form a specificity for association with VLDL region.

Belongs to the apolipoprotein A1/A4/E family. Homotetramer. May interact with ABCA1; functionally associated with ABCA1 in the biogenesis of HDLs. May interact with APP/A4 amyloid-beta peptide; the interaction is extremely stable in vitro but its physiological significance is unclear. May interact with MAPT. May interact with MAP2. In the cerebrospinal fluid, interacts with secreted SORL1. Interacts with PMEL; this allows the loading of PMEL luminal fragment on ILVs to induce fibril nucleation. In terms of processing, APOE exists as multiple glycosylated and sialylated glycoforms within cells and in plasma. The extent of glycosylation and sialylation are tissue and context specific. Post-translationally, glycated in plasma VLDL. Phosphorylated by FAM20C in the extracellular medium.

The protein localises to the secreted. It is found in the extracellular space. Its subcellular location is the extracellular matrix. It localises to the extracellular vesicle. The protein resides in the endosome. The protein localises to the multivesicular body. Its function is as follows. APOE is an apolipoprotein, a protein associating with lipid particles, that mainly functions in lipoprotein-mediated lipid transport between organs via the plasma and interstitial fluids. APOE is a core component of plasma lipoproteins and is involved in their production, conversion and clearance. Apolipoproteins are amphipathic molecules that interact both with lipids of the lipoprotein particle core and the aqueous environment of the plasma. As such, APOE associates with chylomicrons, chylomicron remnants, very low density lipoproteins (VLDL) and intermediate density lipoproteins (IDL) but shows a preferential binding to high-density lipoproteins (HDL). It also binds a wide range of cellular receptors including the LDL receptor/LDLR, the LDL receptor-related proteins LRP1, LRP2 and LRP8 and the very low-density lipoprotein receptor/VLDLR that mediate the cellular uptake of the APOE-containing lipoprotein particles. Finally, APOE also has a heparin-binding activity and binds heparan-sulfate proteoglycans on the surface of cells, a property that supports the capture and the receptor-mediated uptake of APOE-containing lipoproteins by cells. A main function of APOE is to mediate lipoprotein clearance through the uptake of chylomicrons, VLDLs, and HDLs by hepatocytes. APOE is also involved in the biosynthesis by the liver of VLDLs as well as their uptake by peripheral tissues ensuring the delivery of triglycerides and energy storage in muscle, heart and adipose tissues. By participating in the lipoprotein-mediated distribution of lipids among tissues, APOE plays a critical role in plasma and tissues lipid homeostasis. APOE is also involved in two steps of reverse cholesterol transport, the HDLs-mediated transport of cholesterol from peripheral tissues to the liver, and thereby plays an important role in cholesterol homeostasis. First, it is functionally associated with ABCA1 in the biogenesis of HDLs in tissues. Second, it is enriched in circulating HDLs and mediates their uptake by hepatocytes. APOE also plays an important role in lipid transport in the central nervous system, regulating neuron survival and sprouting. This chain is Apolipoprotein E (APOE), found in Hylobates lar (Lar gibbon).